The primary structure comprises 519 residues: Cyclin-dependent kinase C-1 (519 aa).

The Protein kinase domain maps to 25 to 325 (FEKLEQIGEG…AQDALDAEYF (301 aa)). Residues 31-39 (IGEGTYGQV) and Lys54 contribute to the ATP site. Thr35 is modified (phosphothreonine). Tyr36 is modified (phosphotyrosine). Asp164 serves as the catalytic Proton acceptor. A Phosphothreonine modification is found at Thr198. Positions 336–348 (SLPKYESSHEFQT) are enriched in basic and acidic residues. A disordered region spans residues 336–519 (SLPKYESSHE…RNQQQYGNWQ (184 aa)). Positions 426 to 444 (GNQGGGYPNRGGQGGGGSY) are enriched in gly residues. Positions 445–454 (GNAPYPQQGR) are enriched in low complexity. 2 stretches are compositionally biased toward gly residues: residues 464–483 (GMAG…GGGS) and 490–499 (GPYGPSGPGR). Residues 505 to 519 (QQGGSRNQQQYGNWQ) show a composition bias toward polar residues.

Belongs to the protein kinase superfamily. CMGC Ser/Thr protein kinase family. CDC2/CDKX subfamily.

The enzyme catalyses L-seryl-[protein] + ATP = O-phospho-L-seryl-[protein] + ADP + H(+). The catalysed reaction is L-threonyl-[protein] + ATP = O-phospho-L-threonyl-[protein] + ADP + H(+). It catalyses the reaction [DNA-directed RNA polymerase] + ATP = phospho-[DNA-directed RNA polymerase] + ADP + H(+). This Oryza sativa subsp. japonica (Rice) protein is Cyclin-dependent kinase C-1 (CDKC-1).